A 156-amino-acid chain; its full sequence is Ribosome maturation factor RimP (156 aa).

This sequence belongs to the RimP family.

Its subcellular location is the cytoplasm. Its function is as follows. Required for maturation of 30S ribosomal subunits. This is Ribosome maturation factor RimP from Bacillus cereus (strain B4264).